A 72-amino-acid polypeptide reads, in one-letter code: UPF0270 protein KPN78578_37030 (72 aa).

The protein belongs to the UPF0270 family.

This is UPF0270 protein KPN78578_37030 from Klebsiella pneumoniae subsp. pneumoniae (strain ATCC 700721 / MGH 78578).